The sequence spans 296 residues: D-alanine--D-alanine ligase (296 aa).

Residues 103-293 (KEILMHYRMP…FDSFVKRIIE (191 aa)) enclose the ATP-grasp domain. Position 129-180 (129-180 (ISFPVAVKPSSGGSSIATFKVKSIQELKHAYEEASKYGEVMIEQWVTGKEIT)) interacts with ATP. Residues Asp247, Glu260, and Asn262 each coordinate Mg(2+).

The protein belongs to the D-alanine--D-alanine ligase family. It depends on Mg(2+) as a cofactor. Mn(2+) is required as a cofactor.

The protein resides in the cytoplasm. The catalysed reaction is 2 D-alanine + ATP = D-alanyl-D-alanine + ADP + phosphate + H(+). It participates in cell wall biogenesis; peptidoglycan biosynthesis. Functionally, cell wall formation. The chain is D-alanine--D-alanine ligase from Francisella tularensis subsp. tularensis (strain WY96-3418).